A 426-amino-acid polypeptide reads, in one-letter code: 3-phosphoshikimate 1-carboxyvinyltransferase (426 aa).

3-phosphoshikimate-binding residues include K21, S22, and R26. Residue K21 coordinates phosphoenolpyruvate. Residues G93 and R121 each contribute to the phosphoenolpyruvate site. 3-phosphoshikimate-binding residues include S165, Q167, D313, and K340. Q167 is a phosphoenolpyruvate binding site. D313 serves as the catalytic Proton acceptor. Phosphoenolpyruvate contacts are provided by R344 and R386.

This sequence belongs to the EPSP synthase family. Monomer.

Its subcellular location is the cytoplasm. It catalyses the reaction 3-phosphoshikimate + phosphoenolpyruvate = 5-O-(1-carboxyvinyl)-3-phosphoshikimate + phosphate. The protein operates within metabolic intermediate biosynthesis; chorismate biosynthesis; chorismate from D-erythrose 4-phosphate and phosphoenolpyruvate: step 6/7. Its function is as follows. Catalyzes the transfer of the enolpyruvyl moiety of phosphoenolpyruvate (PEP) to the 5-hydroxyl of shikimate-3-phosphate (S3P) to produce enolpyruvyl shikimate-3-phosphate and inorganic phosphate. This is 3-phosphoshikimate 1-carboxyvinyltransferase from Solibacter usitatus (strain Ellin6076).